Here is a 343-residue protein sequence, read N- to C-terminus: Sorbitol dehydrogenase (343 aa).

The segment at 1 to 26 is disordered; that stretch reads MKALVKTQHGTGHFAVQEKPEPTPGK. Residues Cys39, His60, and Glu61 each coordinate Zn(2+). Substrate is bound at residue Glu146. NAD(+) is bound by residues Ile174, Arg200, and 262-264; that span reads VGL.

It belongs to the zinc-containing alcohol dehydrogenase family. Homotetramer. Requires Zn(2+) as cofactor.

It catalyses the reaction keto-D-fructose + NADH + H(+) = D-sorbitol + NAD(+). The catalysed reaction is xylitol + NAD(+) = D-xylulose + NADH + H(+). It carries out the reaction L-iditol + NAD(+) = keto-L-sorbose + NADH + H(+). Its function is as follows. Polyol dehydrogenase that catalyzes the NAD(+)-dependent oxidation of various sugar alcohols. Is active with D-sorbitol (D-glucitol), xylitol and L-iditol as substrates, leading to the C2-oxidized products D-fructose, D-xylulose and L-sorbose, respectively. This Halalkalibacterium halodurans (strain ATCC BAA-125 / DSM 18197 / FERM 7344 / JCM 9153 / C-125) (Bacillus halodurans) protein is Sorbitol dehydrogenase (gutB).